The sequence spans 381 residues: Tryptophan--tRNA ligase (381 aa).

The short motif at 82–90 (PSLGMHIGH) is the 'HIGH' region element. The 'KMSKS' region signature appears at 254-258 (KMSSS).

This sequence belongs to the class-I aminoacyl-tRNA synthetase family.

The protein localises to the cytoplasm. It catalyses the reaction tRNA(Trp) + L-tryptophan + ATP = L-tryptophyl-tRNA(Trp) + AMP + diphosphate + H(+). This is Tryptophan--tRNA ligase from Sulfolobus acidocaldarius (strain ATCC 33909 / DSM 639 / JCM 8929 / NBRC 15157 / NCIMB 11770).